The chain runs to 406 residues: Purine nucleoside permease (406 aa).

An N-terminal signal peptide occupies residues 1-22; sequence MKLSTLFTLATTISTLTTFTIA.

Belongs to the NUP family.

Mammalian nucleoside transport inhibitors dipyridamole and NBMPR inhibit adenosine transport by NUP. Its function is as follows. Nucleoside permease that transports adenosine and guanosine. Does not show any transport activities towards cytidine, adenine, guanine, uridine, and uracil. This chain is Purine nucleoside permease, found in Candida albicans (Yeast).